The sequence spans 533 residues: Beta-1,4 N-acetylgalactosaminyltransferase 1 (533 aa).

The Cytoplasmic portion of the chain corresponds to 1–7 (MRLDRRA). A helical; Signal-anchor for type II membrane protein membrane pass occupies residues 8-25 (LYALVLLLACASLGLLYS). Over 26–533 (STRNAPSLPN…KHRLQCMTAE (508 aa)) the chain is Lumenal. Residues N79, N179, and N274 are each glycosylated (N-linked (GlcNAc...) asparagine). A disulfide bridge connects residues C429 and C476.

This sequence belongs to the glycosyltransferase 2 family. In terms of assembly, homodimer; disulfide-linked. In terms of tissue distribution, most abundant in brain, liver, lung, spleen and testis.

It is found in the golgi apparatus membrane. It catalyses the reaction a ganglioside GM3 (d18:1(4E)) + UDP-N-acetyl-alpha-D-galactosamine = a ganglioside GM2 (d18:1(4E)) + UDP + H(+). It carries out the reaction a ganglioside GD3 (d18:1(4E)) + UDP-N-acetyl-alpha-D-galactosamine = a ganglioside GD2 (d18:1(4E)) + UDP + H(+). The enzyme catalyses a ganglioside GM3 + UDP-N-acetyl-alpha-D-galactosamine = a ganglioside GM2 + UDP + H(+). The catalysed reaction is a ganglioside GD3 + UDP-N-acetyl-alpha-D-galactosamine = a ganglioside GD2 + UDP + H(+). It catalyses the reaction a ganglioside GD1a + UDP-N-acetyl-alpha-D-galactosamine = a ganglioside GalNAc-GD1a + UDP + H(+). It carries out the reaction a ganglioside GT3 (d18:1(4E)) + UDP-N-acetyl-alpha-D-galactosamine = a ganglioside GT2 (d18:1(4E)) + UDP + H(+). The enzyme catalyses a beta-D-Gal-(1-&gt;4)-beta-D-Glc-(1&lt;-&gt;1)-Cer(d18:1(4E)) + UDP-N-acetyl-alpha-D-galactosamine = a ganglioside GA2 (d18:1(4E)) + UDP + H(+). The catalysed reaction is a neolactoside IV(3)-alpha-NeuGc-nLc4Cer + UDP-N-acetyl-alpha-D-galactosamine = a neolactoside IV(4)-beta-GalNAc-IV(3)-alpha-NeuGc-nLc4Cer + UDP + H(+). The protein operates within sphingolipid metabolism. Involved in the biosynthesis of gangliosides GM2, GD2 and GA2. In terms of biological role, involved in the biosynthesis of gangliosides GM2, GD2, GT2 and GA2 from GM3, GD3, GT3 and GA3, respectively. In Mus musculus (Mouse), this protein is Beta-1,4 N-acetylgalactosaminyltransferase 1.